The following is a 483-amino-acid chain: MTVQTFIPNGAKAASENTVNQPVHTSDVSIKKLYIETQGCQMNEYDSHRMADLLGDSHGYVLTTDPKEADILLMNTCSIREKAQEKVFSELGRWRKLKQQNPDLIIGVGGCVASQEGDNIQKRAPYVDMVFGPQTLHRLPQMLDQHQDQIEKPKKDKIKLVDISFPDIEKFDFLPEPRVEGFKAFVSIMEGCSKYCSFCVVPYTRGEEVSRPLDDVLAEIAGLAEKGVREISLLGQNVNGYRGETFEGGICTFPELLRLVSEIPGIGRLRYTTSHPLEFSEELIQCYRDLPQMVSHLHLPVQSGSNAVLQAMKRNHTIDVYIEKIAKLRKIRPDMHLSSDFIIGFPGETEQNFEETYQFIKDLDFDHSYSFIYSKRPGTPASELEDTTSEAVKKERLAKVQHWIKQSSIRKTDAMQGTIQRVLIENVSEKDPNLLVGTADNTRLVTFVGDPMWVGRFAEIEITEIKTLNLVYGELLNLEPDVA.

In terms of domain architecture, MTTase N-terminal spans 31 to 148 (KKLYIETQGC…LPQMLDQHQD (118 aa)). Residues Cys-40, Cys-77, Cys-111, Cys-192, Cys-196, and Cys-199 each coordinate [4Fe-4S] cluster. The Radical SAM core domain occupies 178-410 (RVEGFKAFVS…QHWIKQSSIR (233 aa)). Residues 413-477 (DAMQGTIQRV…LNLVYGELLN (65 aa)) form the TRAM domain.

This sequence belongs to the methylthiotransferase family. MiaB subfamily. Monomer. Requires [4Fe-4S] cluster as cofactor.

It localises to the cytoplasm. The catalysed reaction is N(6)-dimethylallyladenosine(37) in tRNA + (sulfur carrier)-SH + AH2 + 2 S-adenosyl-L-methionine = 2-methylsulfanyl-N(6)-dimethylallyladenosine(37) in tRNA + (sulfur carrier)-H + 5'-deoxyadenosine + L-methionine + A + S-adenosyl-L-homocysteine + 2 H(+). Its function is as follows. Catalyzes the methylthiolation of N6-(dimethylallyl)adenosine (i(6)A), leading to the formation of 2-methylthio-N6-(dimethylallyl)adenosine (ms(2)i(6)A) at position 37 in tRNAs that read codons beginning with uridine. The chain is tRNA-2-methylthio-N(6)-dimethylallyladenosine synthase from Acinetobacter baylyi (strain ATCC 33305 / BD413 / ADP1).